The following is a 335-amino-acid chain: RVS161-like protein RVS162 (335 aa).

Residues V17–I310 enclose the BAR domain. Residues K30–Y56 are a coiled coil. Residues H105–T127 form a disordered region. Acidic residues predominate over residues E107–D118. Positions T222 to I259 form a coiled coil.

It is found in the cytoplasm. The protein localises to the cytoskeleton. Functionally, component of a cytoskeletal structure that is required for membrane curvature. The protein is RVS161-like protein RVS162 of Candida albicans (strain SC5314 / ATCC MYA-2876) (Yeast).